The sequence spans 117 residues: Immunoglobulin heavy variable 1-24 (117 aa).

The first 19 residues, 1–19 (MDCTWRILFLVAAATGTHA), serve as a signal peptide directing secretion. The segment at 20-44 (QVQLVQSGAEVKKPGASVKVSCKVS) is framework-1. In terms of domain architecture, Ig-like spans 20–117 (QVQLVQSGAE…EDTAVYYCAT (98 aa)). The cysteines at positions 41 and 115 are disulfide-linked. The tract at residues 45–52 (GYTLTELS) is complementarity-determining-1. The segment at 53–69 (MHWVRQAPGKGLEWMGG) is framework-2. Residues 70–77 (FDPEDGET) form a complementarity-determining-2 region. The tract at residues 78–115 (IYAQKFQGRVTMTEDTSTDTAYMELSSLRSEDTAVYYC) is framework-3. A complementarity-determining-3 region spans residues 116-117 (AT).

Immunoglobulins are composed of two identical heavy chains and two identical light chains; disulfide-linked.

It is found in the secreted. The protein resides in the cell membrane. Its function is as follows. V region of the variable domain of immunoglobulin heavy chains that participates in the antigen recognition. Immunoglobulins, also known as antibodies, are membrane-bound or secreted glycoproteins produced by B lymphocytes. In the recognition phase of humoral immunity, the membrane-bound immunoglobulins serve as receptors which, upon binding of a specific antigen, trigger the clonal expansion and differentiation of B lymphocytes into immunoglobulins-secreting plasma cells. Secreted immunoglobulins mediate the effector phase of humoral immunity, which results in the elimination of bound antigens. The antigen binding site is formed by the variable domain of one heavy chain, together with that of its associated light chain. Thus, each immunoglobulin has two antigen binding sites with remarkable affinity for a particular antigen. The variable domains are assembled by a process called V-(D)-J rearrangement and can then be subjected to somatic hypermutations which, after exposure to antigen and selection, allow affinity maturation for a particular antigen. The chain is Immunoglobulin heavy variable 1-24 from Homo sapiens (Human).